Reading from the N-terminus, the 466-residue chain is Fumarate hydratase class II (466 aa).

Substrate contacts are provided by residues 99 to 101 (SGT), 129 to 132 (HPND), 139 to 141 (SSN), and T187. Residue H188 is the Proton donor/acceptor of the active site. S318 is an active-site residue. Substrate-binding positions include S319 and 324–326 (KVN).

Belongs to the class-II fumarase/aspartase family. Fumarase subfamily. Homotetramer.

The protein localises to the cytoplasm. It catalyses the reaction (S)-malate = fumarate + H2O. It functions in the pathway carbohydrate metabolism; tricarboxylic acid cycle; (S)-malate from fumarate: step 1/1. Involved in the TCA cycle. Catalyzes the stereospecific interconversion of fumarate to L-malate. The polypeptide is Fumarate hydratase class II (Thermus aquaticus).